Here is a 133-residue protein sequence, read N- to C-terminus: Agouti-signaling protein (133 aa).

A signal peptide spans 1 to 22 (MDVIHLFLATLLVSLCFLTAYS). A compositionally biased stretch (basic and acidic residues) spans 26-36 (PEEKPKDDRSL). Residues 26-83 (PEEKPKDDRSLRNNSSMNLLDSPSVSIMALNKKSKKISRKEAEKKKRSSKKKASMTKV) form a disordered region. Over residues 37–50 (RNNSSMNLLDSPSV) the composition is skewed to polar residues. Residues Asn-38 and Asn-39 are each glycosylated (N-linked (GlcNAc...) asparagine). The segment covering 70-79 (KKRSSKKKAS) has biased composition (basic residues). 5 disulfides stabilise this stretch: Cys-94-Cys-109, Cys-101-Cys-115, Cys-108-Cys-126, Cys-112-Cys-133, and Cys-117-Cys-124. One can recognise an Agouti domain in the interval 94–133 (CVATRDSCKPPAPACCDPCASCQCRFFRSACSCRVLTRTC).

The protein resides in the secreted. In terms of biological role, involved in the regulation of melanogenesis. The binding of ASP to MC1R precludes alpha-MSH initiated signaling and thus blocks production of cAMP, leading to a down-regulation of eumelanogenesis (brown/black pigment) and thus increasing synthesis of pheomelanin (yellow/red pigment). The polypeptide is Agouti-signaling protein (ASIP) (Equus caballus (Horse)).